A 201-amino-acid chain; its full sequence is Sorting nexin-10 (201 aa).

A required for interaction with ATP6V1D region spans residues 8–125 (EEFVSVWVRD…SLHLFLQSHL (118 aa)). Residues 10–127 (FVSVWVRDPR…HLFLQSHLNS (118 aa)) enclose the PX domain. Arginine 53, lysine 79, and arginine 94 together coordinate a 1,2-diacyl-sn-glycero-3-phospho-(1D-myo-inositol-3-phosphate). The interval 155–201 (RFPEEEEEGKKDADVEYDSESSSSGLGHSSDDSSSHGCKTSPALQES) is disordered.

The protein belongs to the sorting nexin family. Interacts with ATP6V1D; may play a role in ciliogenesis. In terms of tissue distribution, expressed in femur, calvariae and teeth.

Its subcellular location is the cytoplasm. It localises to the endosome membrane. The protein resides in the cytoskeleton. The protein localises to the microtubule organizing center. It is found in the centrosome. Functionally, probable phosphoinositide-binding protein involved in protein sorting and membrane trafficking in endosomes. Plays a role in cilium biogenesis through regulation of the transport and the localization of proteins to the cilium. Required for the localization to the cilium of V-ATPase subunit ATP6V1D and ATP6V0D1, and RAB8A. Involved in osteoclast differentiation and therefore bone resorption. The protein is Sorting nexin-10 (Snx10) of Mus musculus (Mouse).